Consider the following 77-residue polypeptide: Large ribosomal subunit protein bL28 (77 aa).

The protein belongs to the bacterial ribosomal protein bL28 family.

The sequence is that of Large ribosomal subunit protein bL28 from Delftia acidovorans (strain DSM 14801 / SPH-1).